We begin with the raw amino-acid sequence, 377 residues long: Actin-related protein T2 (377 aa).

Belongs to the actin family.

The protein resides in the cytoplasm. The protein localises to the cytoskeleton. In Macaca fascicularis (Crab-eating macaque), this protein is Actin-related protein T2 (ACTRT2).